We begin with the raw amino-acid sequence, 286 residues long: 4-hydroxybenzoate octaprenyltransferase (286 aa).

The next 9 helical transmembrane spans lie at 19-39 (AGWL…SHGF), 42-62 (WHLL…GCCV), 92-112 (ALVL…TTNA), 115-135 (IAWS…KRYV), 137-157 (MPQA…FAAV), 161-181 (VPLL…AYDT), 206-226 (FDVA…ALAL), 233-253 (AIYW…GWLI), and 264-284 (AFRL…LSYL).

This sequence belongs to the UbiA prenyltransferase family. Requires Mg(2+) as cofactor.

It is found in the cell inner membrane. It catalyses the reaction all-trans-octaprenyl diphosphate + 4-hydroxybenzoate = 4-hydroxy-3-(all-trans-octaprenyl)benzoate + diphosphate. It participates in cofactor biosynthesis; ubiquinone biosynthesis. Catalyzes the prenylation of para-hydroxybenzoate (PHB) with an all-trans polyprenyl group. Mediates the second step in the final reaction sequence of ubiquinone-8 (UQ-8) biosynthesis, which is the condensation of the polyisoprenoid side chain with PHB, generating the first membrane-bound Q intermediate 3-octaprenyl-4-hydroxybenzoate. The polypeptide is 4-hydroxybenzoate octaprenyltransferase (Polaromonas sp. (strain JS666 / ATCC BAA-500)).